The sequence spans 396 residues: Acetate kinase (396 aa).

Asparagine 8 is a Mg(2+) binding site. Lysine 15 lines the ATP pocket. Position 89 (arginine 89) interacts with substrate. Catalysis depends on aspartate 146, which acts as the Proton donor/acceptor. Residues 206 to 210 (HIGNG), 283 to 285 (DMR), and 331 to 335 (GVGEN) each bind ATP. Residue glutamate 383 participates in Mg(2+) binding.

The protein belongs to the acetokinase family. Homodimer. Requires Mg(2+) as cofactor. The cofactor is Mn(2+).

The protein localises to the cytoplasm. The enzyme catalyses acetate + ATP = acetyl phosphate + ADP. The protein operates within metabolic intermediate biosynthesis; acetyl-CoA biosynthesis; acetyl-CoA from acetate: step 1/2. Functionally, catalyzes the formation of acetyl phosphate from acetate and ATP. Can also catalyze the reverse reaction. This is Acetate kinase from Streptococcus pneumoniae (strain JJA).